A 141-amino-acid polypeptide reads, in one-letter code: Large ribosomal subunit protein uL11 (141 aa).

This sequence belongs to the universal ribosomal protein uL11 family. As to quaternary structure, part of the ribosomal stalk of the 50S ribosomal subunit. Interacts with L10 and the large rRNA to form the base of the stalk. L10 forms an elongated spine to which L12 dimers bind in a sequential fashion forming a multimeric L10(L12)X complex. In terms of processing, one or more lysine residues are methylated.

In terms of biological role, forms part of the ribosomal stalk which helps the ribosome interact with GTP-bound translation factors. The chain is Large ribosomal subunit protein uL11 from Chlorobium phaeobacteroides (strain DSM 266 / SMG 266 / 2430).